A 347-amino-acid polypeptide reads, in one-letter code: GMP reductase (347 aa).

108–131 (DDFTKTRQILAMSSALRFICVDVA) provides a ligand contact to NADP(+). K(+) contacts are provided by Gly-181 and Gly-183. The active-site Thioimidate intermediate is Cys-186. 216–239 (IVGDGGCTCPGDVAKAFGGGADFV) provides a ligand contact to NADP(+).

This sequence belongs to the IMPDH/GMPR family. GuaC type 1 subfamily. In terms of assembly, homotetramer.

The catalysed reaction is IMP + NH4(+) + NADP(+) = GMP + NADPH + 2 H(+). In terms of biological role, catalyzes the irreversible NADPH-dependent deamination of GMP to IMP. It functions in the conversion of nucleobase, nucleoside and nucleotide derivatives of G to A nucleotides, and in maintaining the intracellular balance of A and G nucleotides. The sequence is that of GMP reductase from Aeromonas hydrophila subsp. hydrophila (strain ATCC 7966 / DSM 30187 / BCRC 13018 / CCUG 14551 / JCM 1027 / KCTC 2358 / NCIMB 9240 / NCTC 8049).